The sequence spans 218 residues: Eukaryotic translation initiation factor 4E-1 (218 aa).

The segment at 1–39 (MAEETDTRPASAGSRGRPAPEDDDREEGEITDLACAPSP) is disordered. Residues 21-30 (EDDDREEGEI) show a composition bias toward acidic residues. 2 EIF4G-binding regions span residues 43-46 (HPLE) and 53-89 (FDNPQSKSKQAAWGSSIRPIHTFSTVEEFWGLYNNIN). Residues 61-66 (KQAAWG), lysine 93, and 111-112 (WE) contribute to the mRNA site. Cysteine 116 and cysteine 154 form a disulfide bridge. The EIF4G-binding stretch occupies residues 137–146 (HTLLAMIGEQ). MRNA is bound by residues 161–166 (RGKQER) and 206–210 (KKMDK).

It belongs to the eukaryotic initiation factor 4E family. As to quaternary structure, EIF4F is a multi-subunit complex, the composition of which varies with external and internal environmental conditions. It is composed of at least EIF4A, EIF4E and EIF4G. EIF4E is also known to interact with other partners. In higher plants two isoforms of EIF4F have been identified, named isoform EIF4F and isoform EIF(iso)4F. Isoform EIF4F has subunits p220 and p26, whereas isoform EIF(iso)4F has subunits p82 and p28. In terms of processing, according to the redox status, the Cys-116-Cys-154 disulfide bridge may have a role in regulating protein function by affecting its ability to bind capped mRNA. Phosphorylated upon oxygen deprivation.

The protein resides in the nucleus. The protein localises to the cytoplasm. In terms of biological role, component of the protein complex eIF4F, which is involved in the recognition of the mRNA cap, ATP-dependent unwinding of 5'-terminal secondary structure and recruitment of mRNA to the ribosome. Recognizes and binds the 7-methylguanosine-containing mRNA cap during an early step in the initiation of protein synthesis and facilitates ribosome binding by inducing the unwinding of the mRNAs secondary structures. The chain is Eukaryotic translation initiation factor 4E-1 from Zea mays (Maize).